The primary structure comprises 94 residues: Elongation factor 1-beta (94 aa).

Belongs to the EF-1-beta/EF-1-delta family.

Functionally, promotes the exchange of GDP for GTP in EF-1-alpha/GDP, thus allowing the regeneration of EF-1-alpha/GTP that could then be used to form the ternary complex EF-1-alpha/GTP/AAtRNA. This Ignicoccus hospitalis (strain KIN4/I / DSM 18386 / JCM 14125) protein is Elongation factor 1-beta.